The sequence spans 129 residues: Fluoride-specific ion channel FluC (129 aa).

The next 4 membrane-spanning stretches (helical) occupy residues methionine 1 to alanine 21, glycine 35 to isoleucine 55, leucine 71 to asparagine 91, and alanine 105 to alanine 125. Positions 79 and 82 each coordinate Na(+).

Belongs to the fluoride channel Fluc/FEX (TC 1.A.43) family.

The protein resides in the cell inner membrane. The catalysed reaction is fluoride(in) = fluoride(out). With respect to regulation, na(+) is not transported, but it plays an essential structural role and its presence is essential for fluoride channel function. Functionally, fluoride-specific ion channel. Important for reducing fluoride concentration in the cell, thus reducing its toxicity. The sequence is that of Fluoride-specific ion channel FluC from Chlorobium phaeobacteroides (strain DSM 266 / SMG 266 / 2430).